The following is a 232-amino-acid chain: T-cell surface glycoprotein CD1b-3 (232 aa).

At 1 to 201 the chain is on the extracellular side; it reads GLQEFQFEYP…LYWGHPMYIG (201 aa). 3 cysteine pairs are disulfide-bonded: Cys19–Cys83, Cys48–Cys62, and Cys123–Cys178. Residue Asn45 is glycosylated (N-linked (GlcNAc...) asparagine). Positions 84 to 194 constitute an Ig-like domain; that stretch reads PRYLLGVLDA…LGDQDIILYW (111 aa). A helical transmembrane segment spans residues 202–222; it reads LIFVAIIVPSLILLICLALWF. Residues 223 to 232 are Cytoplasmic-facing; that stretch reads WRRWSYQTVL.

In terms of assembly, heterodimer with B2M (beta-2-microglobulin). Interacts with saposin C.

Its subcellular location is the cell membrane. It is found in the endosome membrane. The protein resides in the lysosome membrane. Antigen-presenting protein that binds self and non-self lipid and glycolipid antigens and presents them to T-cell receptors on natural killer T-cells. The protein is T-cell surface glycoprotein CD1b-3 of Ovis aries (Sheep).